The following is a 599-amino-acid chain: Elongation factor 4 (599 aa).

Residues 4-186 enclose the tr-type G domain; it reads KYIRNFSIIA…AIVEKVPPPK (183 aa). Residues 16 to 21 and 133 to 136 contribute to the GTP site; these read DHGKST and NKID.

Belongs to the TRAFAC class translation factor GTPase superfamily. Classic translation factor GTPase family. LepA subfamily.

The protein localises to the cell inner membrane. The catalysed reaction is GTP + H2O = GDP + phosphate + H(+). Functionally, required for accurate and efficient protein synthesis under certain stress conditions. May act as a fidelity factor of the translation reaction, by catalyzing a one-codon backward translocation of tRNAs on improperly translocated ribosomes. Back-translocation proceeds from a post-translocation (POST) complex to a pre-translocation (PRE) complex, thus giving elongation factor G a second chance to translocate the tRNAs correctly. Binds to ribosomes in a GTP-dependent manner. The sequence is that of Elongation factor 4 from Bdellovibrio bacteriovorus (strain ATCC 15356 / DSM 50701 / NCIMB 9529 / HD100).